Reading from the N-terminus, the 432-residue chain is Phosphomethylpyrimidine synthase (432 aa).

Residues Asn66, Met95, Tyr124, His163, 185–187 (SRG), 226–229 (DGLR), and Glu265 each bind substrate. His269 provides a ligand contact to Zn(2+). Tyr292 is a substrate binding site. A Zn(2+)-binding site is contributed by His333. Cys409, Cys412, and Cys416 together coordinate [4Fe-4S] cluster.

This sequence belongs to the ThiC family. [4Fe-4S] cluster is required as a cofactor.

It carries out the reaction 5-amino-1-(5-phospho-beta-D-ribosyl)imidazole + S-adenosyl-L-methionine = 4-amino-2-methyl-5-(phosphooxymethyl)pyrimidine + CO + 5'-deoxyadenosine + formate + L-methionine + 3 H(+). The protein operates within cofactor biosynthesis; thiamine diphosphate biosynthesis. Functionally, catalyzes the synthesis of the hydroxymethylpyrimidine phosphate (HMP-P) moiety of thiamine from aminoimidazole ribotide (AIR) in a radical S-adenosyl-L-methionine (SAM)-dependent reaction. The chain is Phosphomethylpyrimidine synthase from Thermoanaerobacter sp. (strain X514).